The chain runs to 282 residues: MLERTQRTLKREVRYSGVGIHLGKSSTLHLQPAQTNTGIVFQRQSASGNYENVPALLDHVYTTGRSTTLSRGSAVIATVEHLMAALRSNNIDNLIIQCSGEEIPIGDGSSNVFVELIDQAGICEQEDKVSIARLTRPVYYQHQDIFLAAFPSDELKISYTLHYPQSSTIGTQYKSLVINEESFRQEIAPCRTFALYNELCFLMEKGLIGGGCLDNAVVFKDDGIISRGQLRFADEPVRHKILDLIGDLSLVGRPFVAHVLAVGSGHSSNIAFGKKILEALEL.

The Zn(2+) site is built by histidine 81, histidine 239, and aspartate 243. Catalysis depends on histidine 266, which acts as the Proton donor.

Belongs to the LpxC family. Requires Zn(2+) as cofactor.

The enzyme catalyses a UDP-3-O-[(3R)-3-hydroxyacyl]-N-acetyl-alpha-D-glucosamine + H2O = a UDP-3-O-[(3R)-3-hydroxyacyl]-alpha-D-glucosamine + acetate. It functions in the pathway glycolipid biosynthesis; lipid IV(A) biosynthesis; lipid IV(A) from (3R)-3-hydroxytetradecanoyl-[acyl-carrier-protein] and UDP-N-acetyl-alpha-D-glucosamine: step 2/6. In terms of biological role, catalyzes the hydrolysis of UDP-3-O-myristoyl-N-acetylglucosamine to form UDP-3-O-myristoylglucosamine and acetate, the committed step in lipid A biosynthesis. This is UDP-3-O-acyl-N-acetylglucosamine deacetylase from Chlamydia pneumoniae (Chlamydophila pneumoniae).